The chain runs to 1101 residues: Rho GTPase-activating protein 30 (1101 aa).

A Rho-GAP domain is found at 20-215; that stretch reads CDLQEHLQHS…FILTHVDQLF (196 aa). Disordered regions lie at residues 224 to 243, 300 to 400, and 451 to 529; these read EVESGWRSLPGTRASGSPED, HETK…RAGG, and ALQH…AEDG. Residues 308 to 318 are compositionally biased toward basic and acidic residues; sequence RGAEDREDKSN. Residues 360 to 376 are compositionally biased toward acidic residues; that stretch reads LENDSIEAAEGEQEPEA. Residues 459-472 are compositionally biased toward pro residues; it reads ASGPGPGPGLGPGP. Low complexity predominate over residues 508-520; sequence DSFSFLEDSSSSE. The residue at position 576 (Ser-576) is a Phosphoserine. 2 disordered regions span residues 621 to 906 and 965 to 991; these read GPKP…QPSP and CPRPGRLDGTPGERAWGSRASRSSWRN. Composition is skewed to basic and acidic residues over residues 658–694, 701–735, 759–770, and 779–822; these read GEDKQAEPGGRLDIREEAEGSPETKVEAGKASEDRGE, TKVRLREGSREETEAKEEKSKGQKKADSMEAKGVE, EEAQVEAGRDLE, and AEEK…DSRS. The segment covering 976-991 has biased composition (low complexity); sequence GERAWGSRASRSSWRN. Ser-996 is subject to Phosphoserine. The disordered stretch occupies residues 1050–1101; sequence LELPSEGAEGSGSRSRLSLPPREPQVPDPLLSSQRRSYAFETQANPGKGEGL. The segment covering 1053 to 1069 has biased composition (low complexity); it reads PSEGAEGSGSRSRLSLP. Residues 1080-1094 show a composition bias toward polar residues; it reads LSSQRRSYAFETQAN.

Interacts with RHOU in a GTP-independent manner.

It is found in the cytoplasmic vesicle. Its function is as follows. GTPase-activating protein (GAP) for RAC1 and RHOA, but not for CDC42. In Homo sapiens (Human), this protein is Rho GTPase-activating protein 30 (ARHGAP30).